A 421-amino-acid chain; its full sequence is Putative NBPF family member NBPF7 (421 aa).

Residues 87–143 (IKSMLREELQFKEEKLAEQLKQAEELRQYKVLVHSQERELIQLREKLREGRDASHSL) are a coiled coil. Disordered regions lie at residues 179 to 251 (VHKL…KITS), 312 to 334 (EKEV…HDVS), and 402 to 421 (YNSK…FTED). 2 Olduvai domains span residues 190–279 (EDEN…NILL) and 280–391 (ENQN…RMSQ). Positions 194 to 217 (DKTKELDKVQESPAPREEQKAEEK) are enriched in basic and acidic residues. A compositionally biased stretch (polar residues) spans 230–243 (TYSNSHGPSDSNPP). The span at 312–333 (EKEVLQDSPEERVTTSCSDHDV) shows a compositional bias: basic and acidic residues. Polar residues predominate over residues 403 to 421 (NSKPSSIPNTTLQGSFTED).

It belongs to the NBPF family.

The protein resides in the cytoplasm. The chain is Putative NBPF family member NBPF7 from Homo sapiens (Human).